The following is a 246-amino-acid chain: 5-oxoprolinase subunit A (246 aa).

This sequence belongs to the LamB/PxpA family. In terms of assembly, forms a complex composed of PxpA, PxpB and PxpC.

It catalyses the reaction 5-oxo-L-proline + ATP + 2 H2O = L-glutamate + ADP + phosphate + H(+). In terms of biological role, catalyzes the cleavage of 5-oxoproline to form L-glutamate coupled to the hydrolysis of ATP to ADP and inorganic phosphate. The protein is 5-oxoprolinase subunit A of Cupriavidus pinatubonensis (strain JMP 134 / LMG 1197) (Cupriavidus necator (strain JMP 134)).